We begin with the raw amino-acid sequence, 242 residues long: Protein ABHD14A (242 aa).

Residues alanine 6–proline 26 form a helical; Signal-anchor for type II membrane protein membrane-spanning segment. Asparagine 38 carries an N-linked (GlcNAc...) asparagine glycan. Active-site charge relay system residues include serine 142, aspartate 193, and histidine 220.

The protein belongs to the AB hydrolase superfamily. ABHD14 family.

The protein resides in the cytoplasm. The protein localises to the membrane. Possible role in granule neuron development. The polypeptide is Protein ABHD14A (Rattus norvegicus (Rat)).